Reading from the N-terminus, the 146-residue chain is UPF0178 protein BcerKBAB4_2842 (146 aa).

Belongs to the UPF0178 family.

The protein is UPF0178 protein BcerKBAB4_2842 of Bacillus mycoides (strain KBAB4) (Bacillus weihenstephanensis).